Reading from the N-terminus, the 223-residue chain is Adapter protein MecA (223 aa).

Belongs to the MecA family. Homodimer.

Its function is as follows. Enables the recognition and targeting of unfolded and aggregated proteins to the ClpC protease or to other proteins involved in proteolysis. The polypeptide is Adapter protein MecA (Limosilactobacillus reuteri (strain DSM 20016) (Lactobacillus reuteri)).